The sequence spans 202 residues: uncharacterized protein (202 aa).

Positions 118–202 (SSVSPVSSKK…KVSGTKKVKA (85 aa)) are disordered. A Phosphoserine modification is found at serine 121. 2 stretches are compositionally biased toward basic residues: residues 142–163 (EKSK…KSKR) and 186–202 (SSKS…KVKA).

It localises to the nucleus. It is found in the nucleolus. This is an uncharacterized protein from Schizosaccharomyces pombe (strain 972 / ATCC 24843) (Fission yeast).